The primary structure comprises 124 residues: Small ribosomal subunit protein uS12 (124 aa).

Position 89 is a 3-methylthioaspartic acid (D89). The segment at 104 to 124 (TDGVENRKQSRSKYGTKRPKK) is disordered. The segment covering 112 to 124 (QSRSKYGTKRPKK) has biased composition (basic residues).

It belongs to the universal ribosomal protein uS12 family. In terms of assembly, part of the 30S ribosomal subunit. Contacts proteins S8 and S17. May interact with IF1 in the 30S initiation complex.

Its function is as follows. With S4 and S5 plays an important role in translational accuracy. Interacts with and stabilizes bases of the 16S rRNA that are involved in tRNA selection in the A site and with the mRNA backbone. Located at the interface of the 30S and 50S subunits, it traverses the body of the 30S subunit contacting proteins on the other side and probably holding the rRNA structure together. The combined cluster of proteins S8, S12 and S17 appears to hold together the shoulder and platform of the 30S subunit. In Thermosipho melanesiensis (strain DSM 12029 / CIP 104789 / BI429), this protein is Small ribosomal subunit protein uS12.